The primary structure comprises 431 residues: Probable amino-acid ABC transporter periplasmic-binding protein y4oP (431 aa).

A signal peptide spans Met1–Ala25.

It belongs to the bacterial solute-binding protein 1 family.

The protein localises to the periplasm. In terms of biological role, probably part of the binding-protein-dependent transport system y4oPQRS. This system probably transports a sugar-like molecule. In Sinorhizobium fredii (strain NBRC 101917 / NGR234), this protein is Probable amino-acid ABC transporter periplasmic-binding protein y4oP.